A 573-amino-acid polypeptide reads, in one-letter code: Chaperone Ric-8 (573 aa).

A compositionally biased stretch (basic and acidic residues) spans Glu-308 to Glu-324. Disordered stretches follow at residues Glu-308–Ala-329 and Gly-473–Gln-493. A phosphoserine mark is found at Ser-477, Ser-478, Ser-480, and Ser-483.

Belongs to the synembryn family. Interacts with GDP-bound G(i)-alpha protein G-i-alpha-65A. Does not interact with G-alpha proteins when they are in complex with subunits beta and gamma. Interacts with Frq2 in a Ca(2+)-independent manner but does not interact with Frq1. Expression in the embryo is primarily neural.

It is found in the cytoplasm. The protein localises to the cell cortex. It localises to the presynapse. Chaperone that specifically binds and folds some, but not all, nascent G alpha proteins prior to G protein heterotrimer formation, promoting their stability and activity. Also acts as a guanine nucleotide exchange factor (GEF) for G alpha proteins by stimulating exchange of bound GDP for free GTP. Plays a key role in asymmetric spindle positioning, a step for asymmetric cell division that generates cell diversity during development by activating G(i) alpha protein independently of G-protein coupled receptors. Required during gastrulation and sensory organ precursor (SOP) formation. Plays a role in positively regulating synapse number and neurotransmitter release. The chain is Chaperone Ric-8 (ric8a) from Drosophila melanogaster (Fruit fly).